We begin with the raw amino-acid sequence, 284 residues long: Nucleotide-binding protein Sputcn32_0712 (284 aa).

Position 8–15 (8–15 (GRSGSGKS)) interacts with ATP. 56 to 59 (DVRN) serves as a coordination point for GTP.

This sequence belongs to the RapZ-like family.

Displays ATPase and GTPase activities. This is Nucleotide-binding protein Sputcn32_0712 from Shewanella putrefaciens (strain CN-32 / ATCC BAA-453).